The following is a 77-amino-acid chain: UPF0291 protein YnzC (77 aa).

Residues 56 to 77 (DPEGNDVTPEKLKREQRNNKLH) are disordered. Over residues 63-77 (TPEKLKREQRNNKLH) the composition is skewed to basic and acidic residues.

It belongs to the UPF0291 family.

The protein localises to the cytoplasm. This chain is UPF0291 protein YnzC (ynzC), found in Bacillus subtilis (strain 168).